The sequence spans 72 residues: UPF0270 protein ETA_31870 (72 aa).

It belongs to the UPF0270 family.

This is UPF0270 protein ETA_31870 from Erwinia tasmaniensis (strain DSM 17950 / CFBP 7177 / CIP 109463 / NCPPB 4357 / Et1/99).